The following is a 364-amino-acid chain: Mannose-1-phosphate guanyltransferase (364 aa).

Belongs to the transferase hexapeptide repeat family.

The protein resides in the cytoplasm. The enzyme catalyses alpha-D-mannose 1-phosphate + GTP + H(+) = GDP-alpha-D-mannose + diphosphate. The protein operates within nucleotide-sugar biosynthesis; GDP-alpha-D-mannose biosynthesis; GDP-alpha-D-mannose from alpha-D-mannose 1-phosphate (GTP route): step 1/1. In terms of biological role, involved in cell wall synthesis where it is required for glycosylation. Involved in cell cycle progression through cell-size checkpoint. This Aspergillus oryzae (strain ATCC 42149 / RIB 40) (Yellow koji mold) protein is Mannose-1-phosphate guanyltransferase (mpg1).